The chain runs to 193 residues: Potassium-transporting ATPase KdpC subunit (193 aa).

Residues proline 7–valine 27 form a helical membrane-spanning segment.

This sequence belongs to the KdpC family. The system is composed of three essential subunits: KdpA, KdpB and KdpC.

It localises to the cell inner membrane. Functionally, part of the high-affinity ATP-driven potassium transport (or Kdp) system, which catalyzes the hydrolysis of ATP coupled with the electrogenic transport of potassium into the cytoplasm. This subunit acts as a catalytic chaperone that increases the ATP-binding affinity of the ATP-hydrolyzing subunit KdpB by the formation of a transient KdpB/KdpC/ATP ternary complex. In Variovorax paradoxus (strain S110), this protein is Potassium-transporting ATPase KdpC subunit.